A 777-amino-acid chain; its full sequence is Intraflagellar transport protein 80 homolog (777 aa).

7 WD repeats span residues 12-50, 104-143, 145-185, 186-225, 227-265, 267-306, and 504-542; these read KHQE…TSLI, AHCG…RSTL, QQGI…LQWK, AHDG…LYGS, PHEH…YALE, PNTG…WEWK, and KLGT…YVDR. Residues 758 to 777 are disordered; it reads TKERDRSSSGQSSKNTGLKP. A compositionally biased stretch (polar residues) spans 765–777; the sequence is SSGQSSKNTGLKP.

In terms of assembly, component of the IFT complex B, at least composed of IFT20, IFT22, IFT25, IFT27, IFT46, IFT52, TRAF3IP1/IFT54, IFT57, IFT74, IFT80, IFT81, and IFT88. Interacts with IFT88. Interacts with IFT57 and IFT70B.

The protein localises to the cytoplasm. The protein resides in the cytoskeleton. It localises to the cilium basal body. It is found in the cilium axoneme. Component of the intraflagellar transport (IFT) complex B, which is essential for the development and maintenance of motile and sensory cilia. This Rattus norvegicus (Rat) protein is Intraflagellar transport protein 80 homolog (Ift80).